Reading from the N-terminus, the 199-residue chain is Early activation antigen CD69 (199 aa).

The span at 1–14 (MDSENCSITENSSS) shows a compositional bias: polar residues. Positions 1-20 (MDSENCSITENSSSHLERGQ) are disordered. The Cytoplasmic portion of the chain corresponds to 1 to 40 (MDSENCSITENSSSHLERGQKDHGTSIHFEKHHEGSIQVS). A helical; Signal-anchor for type II membrane protein membrane pass occupies residues 41 to 61 (IPWAVLIVVLITSLIIALIAL). The Extracellular portion of the chain corresponds to 62 to 199 (NVGKYNCPGL…FHWVCSKPSR (138 aa)). Intrachain disulfides connect cysteine 85/cysteine 96, cysteine 113/cysteine 194, and cysteine 173/cysteine 186. One can recognise a C-type lectin domain in the interval 92 to 195 (YKRTCYFFST…CEANFHWVCS (104 aa)). N-linked (GlcNAc...) asparagine glycosylation is found at asparagine 150, asparagine 166, and asparagine 180.

In terms of assembly, homodimer; disulfide-linked. Interacts with S100A8 and S100A9. Interacts with galactin-1/LGALS1. Interacts with S1PR1; this interaction mediates S1PR1 degradation. Interacts with JAK3 and STAT5. In terms of processing, constitutive Ser/Thr phosphorylation in both mature thymocytes and activated T-lymphocytes. Expressed on the surface of activated T-cells, B-cells, natural killer cells, neutrophils and platelets. Present also in eosinophils.

The protein localises to the cell membrane. Transmembrane protein expressed mainly on T-cells resident in mucosa that plays an essential role in immune cell homeostasis. Rapidly expressed on the surface of platelets, T-lymphocytes and NK cells upon activation by various stimuli, such as antigen recognition or cytokine signaling, stimulates different signaling pathways in different cell types. Negatively regulates Th17 cell differentiation through its carbohydrate dependent interaction with galectin-1/LGALS1 present on immature dendritic cells. Association of CD69 cytoplasmic tail with the JAK3/STAT5 signaling pathway regulates the transcription of RORgamma/RORC and, consequently, differentiation toward the Th17 lineage. Also acts via the S100A8/S100A9 complex present on peripheral blood mononuclear cells to promote the conversion of naive CD4 T-cells into regulatory T-cells. Acts as an oxidized low-density lipoprotein (oxLDL) receptor in CD4 T-lymphocytes and negatively regulates the inflammatory response by inducing the expression of PDCD1 through the activation of NFAT. Participates in adipose tissue-derived mesenchymal stem cells (ASCs)-mediated protection against P.aeruginosa infection. Mechanistically, specifically recognizes P.aeruginosa to promote ERK1 activation, followed by granulocyte-macrophage colony-stimulating factor (GM-CSF) and other inflammatory cytokines secretion. In eosinophils, induces IL-10 production through the ERK1/2 pathway. Negatively regulates the chemotactic responses of effector lymphocytes and dendritic cells (DCs) to sphingosine 1 phosphate/S1P by acting as a S1PR1 receptor agonist and facilitating the internalization and degradation of the receptor. In Mus musculus (Mouse), this protein is Early activation antigen CD69 (Cd69).